We begin with the raw amino-acid sequence, 753 residues long: Oligopeptide transporter 5 (753 aa).

The next 15 helical transmembrane spans lie at 56–76, 80–100, 132–152, 163–183, 224–244, 296–316, 368–388, 432–452, 461–481, 506–528, 544–564, 583–603, 615–635, 662–682, and 695–715; these read TWFL…FFGY, PLTV…KLMA, ITIF…LTIV, AAAM…AGMF, FFLI…YLFP, FFAI…ILPI, YLSI…TATI, WWFV…CEGF, WGLL…GVIL, PLAN…YFVG, FIVQ…TTWW, PWTC…GIIG, PGMN…WFFA, AKAV…YYIF, and ILSA…YFAL.

The protein belongs to the oligopeptide OPT transporter (TC 2.A.67.1) family. Expressed predominantly in flowers, and at a very low level in leaves and roots.

The protein localises to the membrane. Involved in the translocation of tetra- and pentapeptides across the cellular membrane in an energy-dependent manner. The polypeptide is Oligopeptide transporter 5 (OPT5) (Arabidopsis thaliana (Mouse-ear cress)).